A 189-amino-acid chain; its full sequence is UPF0301 protein RF_0044 (189 aa).

It belongs to the UPF0301 (AlgH) family.

This is UPF0301 protein RF_0044 from Rickettsia felis (strain ATCC VR-1525 / URRWXCal2) (Rickettsia azadi).